The sequence spans 456 residues: MQVVSSFDFQSSPFSHGAGEILISPVDHRELSSHGDALEGACDDSTRLAAVKVQKVYRSYRTRRRLADSVVVAEELWWQAMDYARLNHSTISFFDYSRPETAVSRWNRVSLNASKVGKGLSIVDKAQKLAFQHWIEAIDPRHRYGHNLHKYYEEWCKADAGQPFFYWLDVGGGIDLDLNECPRSKLKQQCIRYLGPQEREEYEYVIIEGKIVHKLTGKFLHTMHGSEGTKWIFVMSTFKKLYAGLKKKGRFHHSSFLAGGATLAAGRVIVDNGVLKTISAYSGHYRPSDDSLDTFLGFLRENAVNLDNVEVHKASEDSDSYDDYVKSNGGSEPEPLKKEDTTFQAETETDENGNGTVGTLEEAKRSSYQRTLSGGLGSPKANVPQKSMLLRINSKKQSRSLQLGHQLSLKWSTGVGPRIGCAADYPVQLRTQALEFVNLSPKYRSSRLSPTGKLDV.

An IQ domain is found at Thr46–Glu75. The interval Ser315–Gly358 is disordered.

In terms of tissue distribution, expressed in roots, rosette and cauline leaves, flowers and siliques, and at lower levels in stems.

Its subcellular location is the cytoplasm. It is found in the nucleus. Functionally, may be involved in biotic and abiotic stress responses. The chain is IQ domain-containing protein IQM3 from Arabidopsis thaliana (Mouse-ear cress).